A 686-amino-acid polypeptide reads, in one-letter code: MPRRDLVRIVLVGDDGVGKSSIITSLIKEAFVTNVPHVVPEVTIPPEITPENFTTSIVDTSSNPRSRPHLLSSISRAHVICLVYSIADPSSFDRVAEYWLPLFRREGINVPVILVGNKIDLRGGRVTNQGLEDESAPIMREFKEVETVVECSALLPLNVSEVFYFAQKAVLHPTAPLYDSREHTLKPKCLEALKRIFTISDVDKDGLLNAHELNQFQQKCFSTPLQSQELDGILEIVRSYDPYAVQPLPSSSPNTPLSRDSSYGQLHYFNNNVVPPSPPQEGITELGFLYLHTMFIQQGRMETTWTVLRKFGYGESLDLREDFLAPKFDVPSDCSVELSPLGNQFLTDIFEAYDKDQDGALSQNELDDLFSTSPGNPWLSQGFPDTTITDDMGRVTLQGWLAQWSMTTLLNHRTTLNYLAYLGYSSSPATDLPTPTALHVTRPRKQDRRQRKVTRNVFLCYVLGATGSGKTSLLRSFVNRPFKGGEDGLGGYEPTTKVLSVVNSVEMEGVEKYLVLQEFGSKYESEILRNSKRLDMADIIIYVHDSSDTNSFSYISNLRQQYSLDHIPSIFVATKSDLDLAQQRHEVQPDVYCRRLGLQAPMAVSSRLGPLHNLWVAITRVALDPTSSLPRGPRSQMSPAQRIRVVARWGLAATTISAIVAVWMKWQGYSFKGIWGWMAKFAGLRT.

Over 1–648 (MPRRDLVRIV…PAQRIRVVAR (648 aa)) the chain is Cytoplasmic. Residues 4 to 172 (RDLVRIVLVG…FYFAQKAVLH (169 aa)) enclose the Miro 1 domain. Residues 13–20 (GDDGVGKS), 59–63 (DTSSN), and 117–120 (NKID) each bind GTP. EF-hand domains lie at 188 to 223 (KCLE…CFST) and 341 to 376 (LGNQ…SPGN). Residues Asp-201, Asp-203, Asp-205, Glu-212, Asp-354, Asp-356, Asp-358, and Glu-365 each coordinate Ca(2+). Residues 455–624 (RNVFLCYVLG…WVAITRVALD (170 aa)) enclose the Miro 2 domain. Residues 464 to 471 (GATGSGKT), 506 to 510 (EMEGV), and 574 to 577 (TKSD) each bind GTP. A helical; Anchor for type IV membrane protein membrane pass occupies residues 649 to 665 (WGLAATTISAIVAVWMK). Residues 666–686 (WQGYSFKGIWGWMAKFAGLRT) lie on the Mitochondrial intermembrane side of the membrane.

Belongs to the mitochondrial Rho GTPase family.

It localises to the mitochondrion outer membrane. Functionally, mitochondrial GTPase involved in mitochondrial trafficking. Probably involved in control of anterograde transport of mitochondria and their subcellular distribution. The polypeptide is Mitochondrial Rho GTPase 1 (GEM1) (Cryptococcus neoformans var. neoformans serotype D (strain B-3501A) (Filobasidiella neoformans)).